Here is a 302-residue protein sequence, read N- to C-terminus: uncharacterized protein (302 aa).

Glu-47 is an active-site residue.

Belongs to the PhzF family.

This is an uncharacterized protein from Mesorhizobium japonicum (strain LMG 29417 / CECT 9101 / MAFF 303099) (Mesorhizobium loti (strain MAFF 303099)).